A 61-amino-acid polypeptide reads, in one-letter code: MADLKITLIKSIVHREPRQREIAKSLGLGRVHSSVVRPDNAATRGIIFKIAHLVSVEEVNK.

The protein belongs to the universal ribosomal protein uL30 family. As to quaternary structure, part of the 50S ribosomal subunit.

This Oenococcus oeni (strain ATCC BAA-331 / PSU-1) protein is Large ribosomal subunit protein uL30.